A 365-amino-acid chain; its full sequence is Phenoloxidase-activating factor 1 (365 aa).

The first 23 residues, 1–23 (MKQVHFFILWFFVLNLYSIKAQA), serve as a signal peptide directing secretion. Residues 24–74 (GCRTPNGENARCVPINNCKILYDSVLTSDPEVIRFLRASQCGYNGQPLVCC) enclose the Clip domain. Cystine bridges form between cysteine 25-cysteine 73, cysteine 35-cysteine 64, cysteine 41-cysteine 74, cysteine 101-cysteine 240, cysteine 140-cysteine 156, cysteine 184-cysteine 191, cysteine 284-cysteine 301, and cysteine 311-cysteine 340. A Peptidase S1 domain is found at 110 to 364 (ILNGDDTVPE…YRDWIEGNIR (255 aa)). The N-linked (GlcNAc...) asparagine glycan is linked to asparagine 131. Histidine 155 serves as the catalytic Charge relay system. The Ca(2+) site is built by glutamate 175, asparagine 177, threonine 180, and aspartate 183. Catalysis depends on aspartate 220, which acts as the Charge relay system. Serine 315 functions as the Charge relay system in the catalytic mechanism.

The protein belongs to the peptidase S1 family. CLIP subfamily. In the active form, heterodimer of a light chain and a heavy chain; disulfide-linked. Post-translationally, cleaved following the recognition of pathogen-derived products, probably by a lysyl endopeptidase.

The protein resides in the secreted. Its activity is regulated as follows. Protein stability and endopeptidase activity are calcium dependent. First cleavage on prophenoloxidase PPO1 and PPO2 is not dependent on calcium; however, cleavage of PPO1 and PPO2 to their active forms is dependent on calcium and on the presence of PPAF2 and PPAF3. Cleavage of PPAF2 is inhibited by calcium. Inhibited by ethylenediaminetetraacetic acid (EDTA), p-nitrophenyl-p'-guanido-benzoate, diisopropylphosphorofluoridate (iPr2PF) and p-(Amidinophenyl)methanesulfonyl fluoride (p-APMSF). In terms of biological role, serine endopeptidase which, by cleaving prophenoloxidase PPO1 and PPO2, is required for the activation of the prophenoloxidase cascade probably following the recognition of pathogen-derived products. This is Phenoloxidase-activating factor 1 from Holotrichia diomphalia (Korean black chafer).